Reading from the N-terminus, the 293-residue chain is Urease accessory protein UreD (293 aa).

Positions 1–22 are disordered; that stretch reads MAVAQQAWSPGADPAPSAAPVS. Over residues 7–22 the composition is skewed to low complexity; sequence AWSPGADPAPSAAPVS.

This sequence belongs to the UreD family. In terms of assembly, ureD, UreF and UreG form a complex that acts as a GTP-hydrolysis-dependent molecular chaperone, activating the urease apoprotein by helping to assemble the nickel containing metallocenter of UreC. The UreE protein probably delivers the nickel.

The protein localises to the cytoplasm. Its function is as follows. Required for maturation of urease via the functional incorporation of the urease nickel metallocenter. This chain is Urease accessory protein UreD, found in Alkalilimnicola ehrlichii (strain ATCC BAA-1101 / DSM 17681 / MLHE-1).